The sequence spans 86 residues: MNTKLWSHSESDDFSRRFVDDFSLDIEVIISSESMLLTIGENKKVTSWIKCSDNFYLGIDAGRNVVHLYLDKLTPSEVESFFEAVG.

In terms of assembly, interacts with the C-terminal fragment (CT) of cognate toxin protein CdiA-EC869.

Functionally, immunity protein component of a toxin-immunity protein module, which functions as a cellular contact-dependent growth inhibition (CDI) system. CDI modules allow bacteria to communicate with and inhibit the growth of closely related neighboring bacteria in a contact-dependent fashion. Neutralizes the toxic activity of cognate toxin CdiA-EC869 (the C-terminal 289 residue CT fragment). Does not inhibit toxic activity of CdiA from other toxin-immunity modules or strains of E.coli. The protein is Immunity protein CdiI-1 of Escherichia coli O157:H7 (strain EC869).